Consider the following 283-residue polypeptide: Circadian clock oscillator protein KaiA (283 aa).

The tract at residues glutamine 3–proline 133 is psR domain, binds oxidized quinones. The KaiA N-terminal domain occupies glutamine 3–leucine 163. A flexible linker region spans residues glycine 164 to arginine 172. The KaiA C-terminal domain maps to aspartate 173–arginine 281.

In terms of assembly, homodimer. The KaiABC complex composition changes during the circadian cycle to control KaiC phosphorylation. Complexes KaiC(6), KaiA(2-4):KaiC(6), KaiB(6):KaiC(6) and KaiC(6):KaiB(6):KaiA(12) are among the most important forms, many form cooperatively. KaiA and CikA bind to the same region of the KaiB(fs) form and therefore compete.

Functionally, key component of the KaiABC oscillator complex, which constitutes the main circadian regulator in cyanobacteria. Complex composition changes during the circadian cycle to control KaiC phosphorylation. KaiA stimulates KaiC autophosphorylation, while KaiB sequesters KaiA, leading to KaiC autodephosphorylation. KaiA binding to the KaiC CII domain during the subjective day yields KaiA(2-4):KaiC(6) complexes which stimulate KaiC autophosphorylation. Phospho-Ser-431 KaiC accumulation triggers binding of KaiB during the subjective night to form the KaiB(6):KaiC(6) complex, leading to changes in the output regulators CikA and SasA. KaiB(6):KaiC(6) formation exposes a site for KaiA binding on KaiB that sequesters KaiA from KaiC's CII domain, making the KaiC(6):KaiB(6):KaiA(12) complex resulting in KaiC autodephosphorylation. Complete dephosphorylation of KaiC leads to dissociation of KaiA(2):KaiB(1), completing 1 cycle of the Kai oscillator. In terms of biological role, binds oxidized quinones via the N-terminal PsR domain, allowing it to sense redox changes and possibly mediate clock input. The chain is Circadian clock oscillator protein KaiA from Thermostichus vulcanus (Synechococcus vulcanus).